A 366-amino-acid polypeptide reads, in one-letter code: Histidinol-phosphate aminotransferase 1 (366 aa).

Position 226 is an N6-(pyridoxal phosphate)lysine (Lys-226).

Belongs to the class-II pyridoxal-phosphate-dependent aminotransferase family. Histidinol-phosphate aminotransferase subfamily. As to quaternary structure, homodimer. Pyridoxal 5'-phosphate serves as cofactor.

It catalyses the reaction L-histidinol phosphate + 2-oxoglutarate = 3-(imidazol-4-yl)-2-oxopropyl phosphate + L-glutamate. It participates in amino-acid biosynthesis; L-histidine biosynthesis; L-histidine from 5-phospho-alpha-D-ribose 1-diphosphate: step 7/9. In Mannheimia succiniciproducens (strain KCTC 0769BP / MBEL55E), this protein is Histidinol-phosphate aminotransferase 1.